Reading from the N-terminus, the 107-residue chain is Cytochrome c oxidase assembly protein COX16 homolog, mitochondrial (107 aa).

The Mitochondrial matrix segment spans residues 1–14; the sequence is MFGYAVRRALRKSK. The chain crosses the membrane as a helical span at residues 15–37; the sequence is TLRYGVPMLLLIVGGSFGLREFS. Residues 38–107 are Mitochondrial intermembrane-facing; the sequence is QIRYDAVKIK…PEILKTNKTT (70 aa). The interval 80–107 is disordered; it reads NIRGPRPWEDPDLLQGRNPEILKTNKTT.

This sequence belongs to the COX16 family. Associates with the MITRAC complex. Interacts with MT-CO2/COX; specifically interacts with newly synthesized MT-CO2/COX. Interacts with SCO1, SCO2 and COA6.

Its subcellular location is the mitochondrion inner membrane. Functionally, required for the assembly of the mitochondrial respiratory chain complex IV (CIV), also known as cytochrome c oxidase. Promotes the insertion of copper into the active site of cytochrome c oxidase subunit II (MT-CO2/COX2). Interacts specifically with newly synthesized MT-CO2/COX and its copper center-forming metallochaperones SCO1, SCO2 and COA6. Probably facilitates MT-CO2/COX2 association with the MITRAC assembly intermediate containing MT-CO1/COX1, thereby participating in merging the MT-CO1/COX1 and MT-CO2/COX2 assembly lines. This Bos taurus (Bovine) protein is Cytochrome c oxidase assembly protein COX16 homolog, mitochondrial.